The primary structure comprises 318 residues: GTP 3',8-cyclase (318 aa).

The 215-residue stretch at 4–218 (KHGRNIDYLR…MSRSDLIPIE (215 aa)) folds into the Radical SAM core domain. Arg-13 serves as a coordination point for GTP. Positions 20 and 24 each coordinate [4Fe-4S] cluster. Position 26 (Tyr-26) interacts with S-adenosyl-L-methionine. A [4Fe-4S] cluster-binding site is contributed by Cys-27. Arg-62 serves as a coordination point for GTP. Gly-66 is an S-adenosyl-L-methionine binding site. GTP is bound at residue Thr-93. Residue Ser-117 participates in S-adenosyl-L-methionine binding. Position 154 (Lys-154) interacts with GTP. Residue Met-188 coordinates S-adenosyl-L-methionine. [4Fe-4S] cluster-binding residues include Cys-248 and Cys-251. 253–255 (KIR) is a GTP binding site. Cys-265 contributes to the [4Fe-4S] cluster binding site.

It belongs to the radical SAM superfamily. MoaA family. In terms of assembly, monomer and homodimer. Requires [4Fe-4S] cluster as cofactor.

The enzyme catalyses GTP + AH2 + S-adenosyl-L-methionine = (8S)-3',8-cyclo-7,8-dihydroguanosine 5'-triphosphate + 5'-deoxyadenosine + L-methionine + A + H(+). The protein operates within cofactor biosynthesis; molybdopterin biosynthesis. In terms of biological role, catalyzes the cyclization of GTP to (8S)-3',8-cyclo-7,8-dihydroguanosine 5'-triphosphate. This chain is GTP 3',8-cyclase, found in Clostridium acetobutylicum (strain ATCC 824 / DSM 792 / JCM 1419 / IAM 19013 / LMG 5710 / NBRC 13948 / NRRL B-527 / VKM B-1787 / 2291 / W).